Here is a 261-residue protein sequence, read N- to C-terminus: Putative outer membrane protein TC_0650 (261 aa).

The first 17 residues, 1 to 17 (MRFLFAFILLCSPWVSE), serve as a signal peptide directing secretion.

It is found in the cell outer membrane. The chain is Putative outer membrane protein TC_0650 from Chlamydia muridarum (strain MoPn / Nigg).